The chain runs to 199 residues: NAD(P)H dehydrogenase (quinone) (199 aa).

In terms of domain architecture, Flavodoxin-like spans 4 to 190; that stretch reads VLVLYYSTYG…EGARHQGELI (187 aa). Residues 10–15 and 78–80 each bind FMN; these read STYGHV and TRF. Tyrosine 12 contributes to the NAD(+) binding site. Substrate is bound at residue tryptophan 98. FMN-binding positions include 113–119 and histidine 134; that span reads STATQHG.

This sequence belongs to the WrbA family. It depends on FMN as a cofactor.

It catalyses the reaction a quinone + NADH + H(+) = a quinol + NAD(+). It carries out the reaction a quinone + NADPH + H(+) = a quinol + NADP(+). In Cupriavidus metallidurans (strain ATCC 43123 / DSM 2839 / NBRC 102507 / CH34) (Ralstonia metallidurans), this protein is NAD(P)H dehydrogenase (quinone).